Consider the following 492-residue polypeptide: Zinc finger protein 385B (492 aa).

2 Matrin-type zinc fingers span residues K8–L44 and I143–A173. Positions E159–T206 are disordered. Residues S189–T206 show a composition bias toward low complexity. Matrin-type zinc fingers lie at residues K303–R337 and F371–G401. The disordered stretch occupies residues Q388–S420.

It localises to the nucleus. In terms of biological role, may play a role in p53/TP53-mediated apoptosis. This is Zinc finger protein 385B (znf385b) from Danio rerio (Zebrafish).